Reading from the N-terminus, the 338-residue chain is MREQLEQLRCEAFQAIADASTGEALQNIRIKYLGRKGAMTALMKGLGALSAEERPVVGQMVNSIRDEIESGIEAGLFAARERARDEKLRSERIDVTLPGRRPGCGSKHPITLVIEEVCDIFAGLGFSVAEGPEIEHDWYNFEALNFPPEHPARDMQDTFFVDNNLLLRTHTSPVQIRTMLKRKPPLRIIAPGTVYRCDSDATHSPMFHQIEGLMVDQGVSFGDLKGILTIFTNQLFGQKTGVRLRPSFFPFTEPSAEVDIACVICGGKGCRVCKNSGWLEILGAGMVDPEVYRHVGYDAEAVSGFAFGMGIERIAMLKYGISDMRLLFENDVRFLRQF.

E253 is a Mg(2+) binding site.

This sequence belongs to the class-II aminoacyl-tRNA synthetase family. Phe-tRNA synthetase alpha subunit type 1 subfamily. In terms of assembly, tetramer of two alpha and two beta subunits. Requires Mg(2+) as cofactor.

The protein localises to the cytoplasm. The enzyme catalyses tRNA(Phe) + L-phenylalanine + ATP = L-phenylalanyl-tRNA(Phe) + AMP + diphosphate + H(+). In Pelobacter propionicus (strain DSM 2379 / NBRC 103807 / OttBd1), this protein is Phenylalanine--tRNA ligase alpha subunit.